Here is a 603-residue protein sequence, read N- to C-terminus: Protein SHORT-ROOT 2 (603 aa).

Disordered regions lie at residues 11-58 (HHHH…HSHS) and 106-140 (DFSS…SSAG). Over residues 31-44 (SYPSSRGSTSSPSS) the composition is skewed to low complexity. Basic residues predominate over residues 45 to 58 (HHTHNHTYYHHSHS). The segment covering 108–125 (SSSSSSRQFHSGTGAPSS) has biased composition (low complexity). In terms of domain architecture, GRAS spans 179–602 (AAPSSSGRWA…QPVVWASAWK (424 aa)). The segment at 186-249 (RWAAQLLMEC…LTTSGPRTLR (64 aa)) is leucine repeat I (LRI). Residues 268 to 354 (ALKFQELSPW…DTPHLSITTV (87 aa)) are VHIID. The VHIID motif lies at 318–322 (LHILD). The interval 370–406 (EIGQRLEKFARLMGVPFSFRAVHHAGDLADLDLAALD) is leucine repeat II (LRII). Positions 416–514 (LAVNCVNALR…ERAVGRAIVD (99 aa)) are PFYRE. Residues 517-602 (SCPASQSAER…QPVVWASAWK (86 aa)) are SAW.

It belongs to the GRAS family. In terms of assembly, does not interact with SCR1.

It localises to the nucleus. Putative transcription factor involved in asymmetric cell division. The chain is Protein SHORT-ROOT 2 (SHR2) from Oryza sativa subsp. indica (Rice).